Reading from the N-terminus, the 235-residue chain is Transmembrane protein 215 (235 aa).

2 helical membrane-spanning segments follow: residues 12–32 (LVVALVSVFLVFGFMFTVSGM) and 40–60 (IPLLAIGPAICLPGIAAIALA). A disordered region spans residues 99–158 (SDLESGKGSSDELAKKAGLRGKPSLQGQGELPMASSITTPTPMEEGECQSPGQSGRREET).

Its subcellular location is the membrane. In Bos taurus (Bovine), this protein is Transmembrane protein 215 (TMEM215).